Here is a 339-residue protein sequence, read N- to C-terminus: UDP-glucose 4-epimerase (339 aa).

Residues 10–12 (GYI), 31–35 (DNLSN), 58–59 (DL), F80, and K84 each bind NAD(+). 124-126 (SAT) serves as a coordination point for substrate. Y148 acts as the Proton acceptor in catalysis. Residues K152 and Y176 each contribute to the NAD(+) site. Substrate-binding positions include 176 to 178 (YFN), 197 to 199 (NNL), R230, and 291 to 294 (RPGD).

This sequence belongs to the NAD(P)-dependent epimerase/dehydratase family. NAD(+) is required as a cofactor.

The enzyme catalyses UDP-alpha-D-glucose = UDP-alpha-D-galactose. It catalyses the reaction UDP-N-acetyl-alpha-D-glucosamine = UDP-N-acetyl-alpha-D-galactosamine. It participates in cell wall biogenesis; teichoic acid biosynthesis. Catalyzes two distinct but analogous reactions: the reversible epimerization of UDP-glucose to UDP-galactose and the reversible epimerization of UDP-N-acetylglucosamine to UDP-N-acetylgalactosamine. The enzyme is more efficient in catalyzing the interconversion between unacetylated than between corresponding N-acetylated substrates. Essential for growth in media containing either glucose or galactose. May protect the cell from the toxic effects of galactose and glucose or derivatives of both sugars. Involved in the biosynthesis of teichoic acids via the formation of UDP-N-acetylgalactosamine. Influences cell division. The chain is UDP-glucose 4-epimerase from Bacillus subtilis (strain 168).